A 93-amino-acid polypeptide reads, in one-letter code: DNA-directed RNA polymerase subunit omega (93 aa).

The protein belongs to the RNA polymerase subunit omega family. In terms of assembly, the RNAP catalytic core consists of 2 alpha, 1 beta, 1 beta' and 1 omega subunit. When a sigma factor is associated with the core the holoenzyme is formed, which can initiate transcription.

It carries out the reaction RNA(n) + a ribonucleoside 5'-triphosphate = RNA(n+1) + diphosphate. Functionally, promotes RNA polymerase assembly. Latches the N- and C-terminal regions of the beta' subunit thereby facilitating its interaction with the beta and alpha subunits. The polypeptide is DNA-directed RNA polymerase subunit omega (Actinobacillus pleuropneumoniae serotype 7 (strain AP76)).